Reading from the N-terminus, the 666-residue chain is Long chain acyl-CoA synthetase 4 (666 aa).

228-239 (IMYTSGTTGDPK) contributes to the ATP binding site. Residues 495 to 519 (DGWLHTGDVGEWQPDGSMKIIDRKK) form a fatty acid-binding region.

This sequence belongs to the ATP-dependent AMP-binding enzyme family. It depends on Mg(2+) as a cofactor.

It catalyses the reaction a long-chain fatty acid + ATP + CoA = a long-chain fatty acyl-CoA + AMP + diphosphate. It participates in lipid metabolism; fatty acid metabolism. Functionally, activation of long-chain fatty acids for both synthesis of cellular lipids, and degradation via beta-oxidation. Preferentially uses palmitate, palmitoleate, oleate and linoleate. This chain is Long chain acyl-CoA synthetase 4 (LACS4), found in Arabidopsis thaliana (Mouse-ear cress).